The chain runs to 37 residues: Cytochrome b6-f complex subunit 5 (37 aa).

Residues 5–25 (SLFGIVLGLIPITLAGLFVTA) traverse the membrane as a helical segment.

Belongs to the PetG family. In terms of assembly, the 4 large subunits of the cytochrome b6-f complex are cytochrome b6, subunit IV (17 kDa polypeptide, PetD), cytochrome f and the Rieske protein, while the 4 small subunits are PetG, PetL, PetM and PetN. The complex functions as a dimer.

The protein resides in the plastid. Its subcellular location is the chloroplast thylakoid membrane. Its function is as follows. Component of the cytochrome b6-f complex, which mediates electron transfer between photosystem II (PSII) and photosystem I (PSI), cyclic electron flow around PSI, and state transitions. PetG is required for either the stability or assembly of the cytochrome b6-f complex. The chain is Cytochrome b6-f complex subunit 5 from Arabis hirsuta (Hairy rock-cress).